Reading from the N-terminus, the 157-residue chain is Cell number regulator 10 (157 aa).

The next 2 helical transmembrane spans lie at 41–57 (DCGL…ITFG) and 66–83 (GATS…LAYF).

The protein belongs to the cornifelin family. Expressed in roots, leaves, stalks, immature ears and silks.

It is found in the membrane. The polypeptide is Cell number regulator 10 (CNR10) (Zea mays (Maize)).